The following is a 338-amino-acid chain: Thiosulfate-binding protein (338 aa).

An N-terminal signal peptide occupies residues 1 to 25; it reads MAVNLLKKNSLALVASLLLAGHVQA.

This sequence belongs to the prokaryotic sulfate-binding protein family. As to quaternary structure, the complex is composed of two ATP-binding proteins (CysA), two transmembrane proteins (CysT and CysW) and a solute-binding protein (CysP).

Its subcellular location is the periplasm. Its function is as follows. Part of the ABC transporter complex CysAWTP (TC 3.A.1.6.1) involved in sulfate/thiosulfate import. This protein specifically binds thiosulfate and is involved in its transmembrane transport. The protein is Thiosulfate-binding protein (cysP) of Escherichia coli (strain K12).